Here is a 129-residue protein sequence, read N- to C-terminus: Small ribosomal subunit protein uS11 (129 aa).

It belongs to the universal ribosomal protein uS11 family. As to quaternary structure, part of the 30S ribosomal subunit. Interacts with proteins S7 and S18. Binds to IF-3.

In terms of biological role, located on the platform of the 30S subunit, it bridges several disparate RNA helices of the 16S rRNA. Forms part of the Shine-Dalgarno cleft in the 70S ribosome. The polypeptide is Small ribosomal subunit protein uS11 (Nitrosomonas europaea (strain ATCC 19718 / CIP 103999 / KCTC 2705 / NBRC 14298)).